A 784-amino-acid polypeptide reads, in one-letter code: Armadillo repeat-containing X-linked protein 2 (784 aa).

Over 1–6 (MSRARD) the chain is Mitochondrial intermembrane. 2 mitochondrion outer membrane (MOM)-targeting sequence regions span residues 1-6 (MSRARD) and 26-40 (KYTR…RLTK). The chain crosses the membrane as a helical; Signal-anchor span at residues 7–27 (AGCVAAGIVIGASAWYCVYKY). Over 28-784 (TRGKDQKKKR…VKVIKLVNKF (757 aa)) the chain is Cytoplasmic. Disordered regions lie at residues 328–353 (TSGG…RTAS), 388–461 (HSGA…ELGM), and 488–522 (PESE…TIPM). The span at 396–418 (GTSGSSKTAATGKKAAPGAHTGA) shows a compositional bias: low complexity. Residues 488 to 508 (PESEEGESGWTDTESDSDSEP) show a composition bias toward acidic residues. ARM repeat units lie at residues 528-568 (PYEI…NNAN), 570-609 (SCNQ…NLSE), and 650-689 (ITND…NFAE).

It belongs to the eutherian X-chromosome-specific Armcx family. As to expression, widely expressed in the adult nervous tissue, especially in the forebrain, including the cerebral cortex, hippocampus and thalamus.

It is found in the mitochondrion. The protein localises to the mitochondrion outer membrane. In terms of biological role, may regulate the dynamics and distribution of mitochondria in neural cells. The protein is Armadillo repeat-containing X-linked protein 2 (Armcx2) of Mus musculus (Mouse).